A 341-amino-acid polypeptide reads, in one-letter code: UDP-N-acetylenolpyruvoylglucosamine reductase (341 aa).

In terms of domain architecture, FAD-binding PCMH-type spans 13-185 (FGVEQSCLSM…TAVGLRLPKA (173 aa)). The active site involves Arg-161. The Proton donor role is filled by Ser-231. Glu-327 is a catalytic residue.

Belongs to the MurB family. It depends on FAD as a cofactor.

Its subcellular location is the cytoplasm. The catalysed reaction is UDP-N-acetyl-alpha-D-muramate + NADP(+) = UDP-N-acetyl-3-O-(1-carboxyvinyl)-alpha-D-glucosamine + NADPH + H(+). Its pathway is cell wall biogenesis; peptidoglycan biosynthesis. Functionally, cell wall formation. The protein is UDP-N-acetylenolpyruvoylglucosamine reductase of Shewanella sp. (strain MR-7).